The primary structure comprises 1215 residues: Inner capsid protein VP3 (1215 aa).

Residues 1–81 (MPRRPRRNAK…RVDNDGDVIT (81 aa)) are disordered. Over residues 21–44 (LVAPAANASVSSTVNTTTSPTLAA) the composition is skewed to low complexity. A C2H2-type zinc finger spans residues 118–141 (YRCNVCNAEFPSMSAMTEHLRTSH).

Belongs to the turreted BTV-fold inner capsid family. In terms of assembly, homodecamer; each decamer is made up of two conformers of VP2, called VP2A and VP2B. 12 homodecamers assemble to form an icosahedral capsid. Interacts with VP6.

The protein localises to the virion. Functionally, inner capsid protein that self-assembles to form an icosahedral capsid with a T=2 symmetry, which consists of 120 copies of VP2, with channels at each of its five-fold vertices. This capsid constitutes the innermost concentric layer of the viral mature particle. This is Inner capsid protein VP3 (S3) from Ctenopharyngodon idella (Grass carp).